Consider the following 123-residue polypeptide: Holo-[acyl-carrier-protein] synthase (123 aa).

Mg(2+) contacts are provided by D8 and E56.

Belongs to the P-Pant transferase superfamily. AcpS family. Requires Mg(2+) as cofactor.

Its subcellular location is the cytoplasm. It carries out the reaction apo-[ACP] + CoA = holo-[ACP] + adenosine 3',5'-bisphosphate + H(+). Functionally, transfers the 4'-phosphopantetheine moiety from coenzyme A to a Ser of acyl-carrier-protein. The polypeptide is Holo-[acyl-carrier-protein] synthase (Treponema denticola (strain ATCC 35405 / DSM 14222 / CIP 103919 / JCM 8153 / KCTC 15104)).